Consider the following 1048-residue polypeptide: Protein argonaute 7 (1048 aa).

The segment covering 1–14 (MEGEREGVVAKNED) has biased composition (basic and acidic residues). Disordered stretches follow at residues 1–50 (MEGE…GSSG) and 121–141 (KAAD…KKPP). The span at 16–37 (AGGGGGGLGTGGNGGGGGGGSA) shows a compositional bias: gly residues. Residues 131 to 141 (MWKHRPSKKPP) show a composition bias toward basic residues. The 109-residue stretch at 422–530 (KRCDFLKDLP…VPMELCVVCE (109 aa)) folds into the PAZ domain. Residues 709 to 1017 (LLICVMERRH…AAYRGRLYLE (309 aa)) enclose the Piwi domain.

It belongs to the argonaute family. Ago subfamily. As to expression, expressed in the reproductive shoot apex.

Functionally, involved in the RNA silencing pathway. May bind to short RNAs such as microRNAs (miRNAs) or short interfering RNAs (siRNAs), and represses the translation of mRNAs which are complementary to them. Regulates shoot apical meristem (SAM) initiation and maintenance and leaf polarization through the trans-acting siRNAS (ta-siRNAs) pathway which probably modulates the expression of the ARF2, ARF3, ARF4, ARF14 and ARF15 genes. The polypeptide is Protein argonaute 7 (AGO7) (Oryza sativa subsp. japonica (Rice)).